The chain runs to 178 residues: Prion-like protein doppel (178 aa).

An N-terminal signal peptide occupies residues 1-25 (MRKHLGGCWLAIVCILLFSQLCSVK). A flexible tail region spans residues 27–50 (RGIKHRIKWNRKVLPSTSQVTEAR). A globular region spans residues 51-154 (TAEIRPGAFI…KHCDFWLERG (104 aa)). 2 cysteine pairs are disulfide-bonded: cysteine 94–cysteine 147 and cysteine 108–cysteine 142. N-linked (GlcNAc...) asparagine glycosylation is found at asparagine 98 and asparagine 110. A cu(2+) binding region spans residues 124 to 141 (KQDNKLYQRVLWQLIREL). A lipid anchor (GPI-anchor amidated glycine) is attached at glycine 154. Residues 155–178 (AGLRVTLDQPMMLCLLVFIWFIVK) constitute a propeptide, removed in mature form.

The protein belongs to the prion family. N-glycosylated. In terms of processing, O-glycosylated. In terms of tissue distribution, strongly expressed in testis. Detected at low levels in ovary, spleen, kidney and mammary gland.

It localises to the cell membrane. Functionally, required for normal acrosome reaction and for normal male fertility. Can bind Cu(2+). This Bos taurus (Bovine) protein is Prion-like protein doppel (PRND).